Here is a 1925-residue protein sequence, read N- to C-terminus: Cilia- and flagella-associated protein 65 (1925 aa).

Residues 188–208 form a helical membrane-spanning segment; the sequence is FFTVIPQPIFLSPGITLTLPI. One can recognise an MSP domain in the interval 877–986; the sequence is QLKLDTHKSL…THYMLRLVGV (110 aa). Residues 1525 to 1550 adopt a coiled-coil conformation; that stretch reads SQQLMRQYHKELQEWKDEKVRQEVEF. 2 disordered regions span residues 1645-1667 and 1736-1823; these read KRKA…WGPV and SSWE…PESQ. Composition is skewed to basic and acidic residues over residues 1649–1661 and 1739–1762; these read PREE…EKSP and EDGK…KKEE. The span at 1763–1804 shows a compositional bias: acidic residues; it reads GEEEKGEEEEEELEEEEEEEEETEEEELGKEEIEEKEEERDE.

Belongs to the CFAP65 family. As to quaternary structure, interacts with CFAP47.

Its subcellular location is the cell projection. It localises to the cilium. The protein localises to the flagellum membrane. It is found in the cytoplasmic vesicle. The protein resides in the secretory vesicle. Its subcellular location is the acrosome membrane. It localises to the cytoplasm. Plays a role in flagellar formation and sperm motility. The polypeptide is Cilia- and flagella-associated protein 65 (Homo sapiens (Human)).